The chain runs to 235 residues: Type II secretion system protein N (235 aa).

Residues 1 to 34 (MIPRRSSDITIKTRSDVLPFSGASSRWLQRYAPA) are Cytoplasmic-facing. Residues 35–55 (LLAVALIIAMSISLAWQAAGW) traverse the membrane as a helical; Signal-anchor for type II membrane protein segment. Topologically, residues 56–235 (LRLQRSPVAV…EPTTTPTESD (180 aa)) are periplasmic. Positions 205–235 (DALRQQMEATPIAEPAEEDSSEPTTTPTESD) are disordered. A compositionally biased stretch (low complexity) spans 226–235 (EPTTTPTESD).

The protein localises to the cell inner membrane. In terms of biological role, involved in a type II secretion system (T2SS, formerly general secretion pathway, GSP) for the export of proteins. Required for the translocation of a variety of enzymes across the outer membrane. In Pseudomonas aeruginosa (strain ATCC 15692 / DSM 22644 / CIP 104116 / JCM 14847 / LMG 12228 / 1C / PRS 101 / PAO1), this protein is Type II secretion system protein N (xcpP).